The following is a 474-amino-acid chain: Gasdermin-C (474 aa).

The tract at residues 1 to 237 (MLYTFDQVSK…TCAILLSANA (237 aa)) is triggers pyroptosis.

It belongs to the gasdermin family. Homooligomer; homooligomeric ring-shaped pore complex containing 27-28 subunits when inserted in the membrane. Post-translationally, cleavage by CASP8 relieves autoinhibition by releasing the N-terminal moiety (Gasdermin-C, N-terminal) that initiates pyroptosis. In terms of processing, palmitoylated.

The protein resides in the cytoplasm. It is found in the cytosol. Its subcellular location is the cell membrane. The full-length protein before cleavage is inactive: intramolecular interactions between N- and C-terminal domains mediate autoinhibition in the absence of activation signal. The intrinsic pyroptosis-inducing activity is carried by the released N-terminal moiety (Gasdermin-C, N-terminal) following cleavage by caspase CASP8. In terms of biological role, this form constitutes the precursor of the pore-forming protein: upon cleavage, the released N-terminal moiety (Gasdermin-C, N-terminal) binds to membranes and forms pores, triggering pyroptosis. Functionally, pore-forming protein that causes membrane permeabilization and pyroptosis. Produced by the cleavage of gasdermin-C by caspase CASP8 in response to death signals. After cleavage, moves to the plasma membrane where it strongly binds to membrane inner leaflet lipids. Homooligomerizes within the membrane and forms pores of 10-15 nanometers (nm) of inner diameter, triggering pyroptosis. The polypeptide is Gasdermin-C (Rattus norvegicus (Rat)).